A 265-amino-acid polypeptide reads, in one-letter code: Uridylate kinase (265 aa).

The disordered stretch occupies residues methionine 1 to serine 29. An ATP-binding site is contributed by lysine 40 to glycine 43. Glycine 81 is a binding site for UMP. Residues glycine 82 and arginine 86 each contribute to the ATP site. UMP contacts are provided by residues aspartate 101 and methionine 162 to threonine 169. ATP-binding residues include phenylalanine 195 and aspartate 198.

This sequence belongs to the UMP kinase family. In terms of assembly, homohexamer.

The protein localises to the cytoplasm. The catalysed reaction is UMP + ATP = UDP + ADP. It functions in the pathway pyrimidine metabolism; CTP biosynthesis via de novo pathway; UDP from UMP (UMPK route): step 1/1. Its activity is regulated as follows. Inhibited by UTP. In terms of biological role, catalyzes the reversible phosphorylation of UMP to UDP. The sequence is that of Uridylate kinase from Mycolicibacterium paratuberculosis (strain ATCC BAA-968 / K-10) (Mycobacterium paratuberculosis).